The chain runs to 363 residues: MKFLDEAKVYIRSGDGGAGSVSFRREKFIEFGGPDGGDGGRGGDVWVEAVNGLNTLIDFRYQQHFKATIGTHGMGRNRTGANGSDVTLKVPVGTQIFEEDRETMICDLTEEGQRYCLAHGGNGGFGNAHFKTSVNQAPDWANPGLPGEEKTIWLRLKLIADAGLVGLPNAGKSTFLASVTRARPKIANYPFTTLHPNLGVATVDEREFILADIPGLIEGAHEGVGIGDRFLGHVERTRVLLHLVSAQEEKVGKAYKTVKHELEAYGNELTDKPEIVALSQIDVLDEAELKKKTKELAKACGRTPFQISAVTGRGMTEVLRALRDIIVQENAEEKPAKAPKLRHRDMIVSEENNQGEDGADDQP.

The region spanning 1–159 (MKFLDEAKVY…KTIWLRLKLI (159 aa)) is the Obg domain. An OBG-type G domain is found at 160–327 (ADAGLVGLPN…VLRALRDIIV (168 aa)). GTP is bound by residues 166–173 (GLPNAGKS), 191–195 (FTTLH), 212–215 (DIPG), 279–282 (SQID), and 308–310 (SAV). S173 and T193 together coordinate Mg(2+). The tract at residues 332–363 (EEKPAKAPKLRHRDMIVSEENNQGEDGADDQP) is disordered. Positions 353 to 363 (NQGEDGADDQP) are enriched in acidic residues.

The protein belongs to the TRAFAC class OBG-HflX-like GTPase superfamily. OBG GTPase family. Monomer. Requires Mg(2+) as cofactor.

It localises to the cytoplasm. Functionally, an essential GTPase which binds GTP, GDP and possibly (p)ppGpp with moderate affinity, with high nucleotide exchange rates and a fairly low GTP hydrolysis rate. Plays a role in control of the cell cycle, stress response, ribosome biogenesis and in those bacteria that undergo differentiation, in morphogenesis control. In Rhizobium etli (strain ATCC 51251 / DSM 11541 / JCM 21823 / NBRC 15573 / CFN 42), this protein is GTPase Obg.